A 199-amino-acid polypeptide reads, in one-letter code: Recombination protein RecR (199 aa).

The C4-type zinc-finger motif lies at 57–72; that stretch reads CEICGNLDTKSICHIC. Residues 80-175 form the Toprim domain; the sequence is STIAIVETVA…KISRLASGIP (96 aa).

This sequence belongs to the RecR family.

Functionally, may play a role in DNA repair. It seems to be involved in an RecBC-independent recombinational process of DNA repair. It may act with RecF and RecO. The sequence is that of Recombination protein RecR from Rickettsia prowazekii (strain Madrid E).